A 263-amino-acid chain; its full sequence is MSQADLLDQDPVFQLKGSMLAVTILELAHNDLARLERQLADKVAQAPNFFRDTPLVMALDKLPEGEGRLDLPALLEVCRRHGLRTLAIRAGREEDIAAAQALDLPVLPPSGARERPLDIKDSAPRKPAEEPSPSAGEARPEPAKAEEKPAEPVSRPTKVVKTPVRGGMQIYAAGGDLIVLAAVSPGAELLADGNIHVYGPMRGRALAGVKGDATARIFCQQLAAELVSIAGNYKVAEDLRRSPQWGKAVHVSLSGDVLNITRL.

A disordered region spans residues 107–159 (LPPSGARERPLDIKDSAPRKPAEEPSPSAGEARPEPAKAEEKPAEPVSRPTKV). 2 stretches are compositionally biased toward basic and acidic residues: residues 112–129 (ARERPLDIKDSAPRKPAE) and 138–150 (ARPEPAKAEEKPA).

This sequence belongs to the MinC family. In terms of assembly, interacts with MinD and FtsZ.

Its function is as follows. Cell division inhibitor that blocks the formation of polar Z ring septums. Rapidly oscillates between the poles of the cell to destabilize FtsZ filaments that have formed before they mature into polar Z rings. Prevents FtsZ polymerization. The protein is Probable septum site-determining protein MinC of Pseudomonas aeruginosa (strain LESB58).